Reading from the N-terminus, the 281-residue chain is Apolipoprotein Eb (281 aa).

The signal sequence occupies residues 1–18 (MRSLVVFFALAVLTGCQA). The propeptide occupies 19–24 (RSLFQA). Residues 34 to 66 (MVDRFWQYVSELNTQTDGMVQNIKGSQLSRELD) form a 3 X approximate tandem repeats region. 9 tandem repeats follow at residues 67–88 (TLITDTMAELSSYSENLQTQMT), 89–110 (PYASDAAGQLSKDLQLLAGKLQ), 111–132 (TDMTDAKERSTQYLQELKTMME), 133–154 (QNADDVKNRVGTYTRKLKKRLN), 155–176 (KDTEEIRNTVATYMSEMQSRAS), 177–199 (QNADAVKDRFQPYMSQAQDGATQ), 200–227 (KLGAISELMKAQAQEVSEQLEVQAGALK), 228–249 (EKLEETAENLRTSLEGRVDELT), and 254–281 (PYSQKIREQLQEVMDKIKEATAALPTQA). Residues 67-281 (TLITDTMAEL…EATAALPTQA (215 aa)) are 9 X 22 AA approximate tandem repeats.

Belongs to the apolipoprotein A1/A4/E family. Homotetramer.

The protein resides in the secreted. Its subcellular location is the extracellular space. It localises to the extracellular matrix. Its function is as follows. APOE is an apolipoprotein, a protein associating with lipid particles, that mainly functions in lipoprotein-mediated lipid transport between organs via the plasma and interstitial fluids. APOE is a core component of plasma lipoproteins and is involved in their production, conversion and clearance. Apolipoproteins are amphipathic molecules that interact both with lipids of the lipoprotein particle core and the aqueous environment of the plasma. This is Apolipoprotein Eb (apoeb) from Danio rerio (Zebrafish).